We begin with the raw amino-acid sequence, 142 residues long: Large ribosomal subunit protein uL11 (142 aa).

Belongs to the universal ribosomal protein uL11 family. As to quaternary structure, part of the ribosomal stalk of the 50S ribosomal subunit. Interacts with L10 and the large rRNA to form the base of the stalk. L10 forms an elongated spine to which L12 dimers bind in a sequential fashion forming a multimeric L10(L12)X complex. Post-translationally, one or more lysine residues are methylated.

Forms part of the ribosomal stalk which helps the ribosome interact with GTP-bound translation factors. This Xylella fastidiosa (strain Temecula1 / ATCC 700964) protein is Large ribosomal subunit protein uL11.